The chain runs to 329 residues: GTP 3',8-cyclase (329 aa).

In terms of domain architecture, Radical SAM core spans 8-234 (AFARKFYYLR…QLRQRSDGPA (227 aa)). Arginine 17 lines the GTP pocket. [4Fe-4S] cluster-binding residues include cysteine 24 and cysteine 28. Tyrosine 30 provides a ligand contact to S-adenosyl-L-methionine. Cysteine 31 contacts [4Fe-4S] cluster. Position 68 (arginine 68) interacts with GTP. Glycine 72 lines the S-adenosyl-L-methionine pocket. Threonine 99 is a binding site for GTP. Position 123 (serine 123) interacts with S-adenosyl-L-methionine. A GTP-binding site is contributed by lysine 160. Methionine 194 is an S-adenosyl-L-methionine binding site. Positions 257 and 260 each coordinate [4Fe-4S] cluster. 262–264 (RLR) is a binding site for GTP. Cysteine 274 provides a ligand contact to [4Fe-4S] cluster.

Belongs to the radical SAM superfamily. MoaA family. Monomer and homodimer. It depends on [4Fe-4S] cluster as a cofactor.

It carries out the reaction GTP + AH2 + S-adenosyl-L-methionine = (8S)-3',8-cyclo-7,8-dihydroguanosine 5'-triphosphate + 5'-deoxyadenosine + L-methionine + A + H(+). Its pathway is cofactor biosynthesis; molybdopterin biosynthesis. Catalyzes the cyclization of GTP to (8S)-3',8-cyclo-7,8-dihydroguanosine 5'-triphosphate. The chain is GTP 3',8-cyclase from Shigella dysenteriae serotype 1 (strain Sd197).